We begin with the raw amino-acid sequence, 59 residues long: Large ribosomal subunit protein uL30 (59 aa).

It belongs to the universal ribosomal protein uL30 family. Part of the 50S ribosomal subunit.

The sequence is that of Large ribosomal subunit protein uL30 from Bacillus licheniformis (strain ATCC 14580 / DSM 13 / JCM 2505 / CCUG 7422 / NBRC 12200 / NCIMB 9375 / NCTC 10341 / NRRL NRS-1264 / Gibson 46).